The following is a 347-amino-acid chain: Protein pelota homolog (347 aa).

Belongs to the eukaryotic release factor 1 family. Pelota subfamily. Monomer. It depends on a divalent metal cation as a cofactor.

The protein localises to the cytoplasm. Functionally, may function in recognizing stalled ribosomes, interact with stem-loop structures in stalled mRNA molecules, and effect endonucleolytic cleavage of the mRNA. May play a role in the release non-functional ribosomes and degradation of damaged mRNAs. Has endoribonuclease activity. The polypeptide is Protein pelota homolog (Methanocaldococcus jannaschii (strain ATCC 43067 / DSM 2661 / JAL-1 / JCM 10045 / NBRC 100440) (Methanococcus jannaschii)).